The chain runs to 186 residues: Putative 5'(3')-deoxyribonucleotidase (186 aa).

The active-site Nucleophile is Asp6. The Mg(2+) site is built by Asp6, Asp8, and Asp137. Residue Asp8 is the Proton donor of the active site.

It belongs to the 5'(3')-deoxyribonucleotidase family. Mg(2+) is required as a cofactor.

In terms of biological role, dephosphorylates the 5' and 2'(3')-phosphates of deoxyribonucleotides. The protein is Putative 5'(3')-deoxyribonucleotidase of Bordetella pertussis (strain Tohama I / ATCC BAA-589 / NCTC 13251).